The chain runs to 344 residues: UDP-3-O-acylglucosamine N-acyltransferase (344 aa).

The active-site Proton acceptor is His244.

Belongs to the transferase hexapeptide repeat family. LpxD subfamily. Homotrimer.

It carries out the reaction a UDP-3-O-[(3R)-3-hydroxyacyl]-alpha-D-glucosamine + a (3R)-hydroxyacyl-[ACP] = a UDP-2-N,3-O-bis[(3R)-3-hydroxyacyl]-alpha-D-glucosamine + holo-[ACP] + H(+). Its pathway is bacterial outer membrane biogenesis; LPS lipid A biosynthesis. Its function is as follows. Catalyzes the N-acylation of UDP-3-O-acylglucosamine using 3-hydroxyacyl-ACP as the acyl donor. Is involved in the biosynthesis of lipid A, a phosphorylated glycolipid that anchors the lipopolysaccharide to the outer membrane of the cell. This is UDP-3-O-acylglucosamine N-acyltransferase from Pseudoalteromonas atlantica (strain T6c / ATCC BAA-1087).